The chain runs to 311 residues: GTP cyclohydrolase MptA (311 aa).

The protein belongs to the GTP cyclohydrolase IV family. In terms of assembly, homodimer. Fe(2+) is required as a cofactor.

It carries out the reaction GTP + H2O = 7,8-dihydroneopterin 2',3'-cyclic phosphate + formate + diphosphate + H(+). It participates in cofactor biosynthesis; 5,6,7,8-tetrahydromethanopterin biosynthesis. In terms of biological role, converts GTP to 7,8-dihydro-D-neopterin 2',3'-cyclic phosphate, the first intermediate in the biosynthesis of coenzyme methanopterin. This Methanobrevibacter smithii (strain ATCC 35061 / DSM 861 / OCM 144 / PS) protein is GTP cyclohydrolase MptA.